We begin with the raw amino-acid sequence, 365 residues long: tRNA-specific 2-thiouridylase MnmA (365 aa).

Residues 14 to 21 and Leu40 each bind ATP; that span reads AMSGGVDS. The active-site Nucleophile is Cys108. A disulfide bridge connects residues Cys108 and Cys204. Residue Gly132 coordinates ATP. Residues 154-156 form an interaction with tRNA region; that stretch reads KDQ. The active-site Cysteine persulfide intermediate is the Cys204.

It belongs to the MnmA/TRMU family.

Its subcellular location is the cytoplasm. The enzyme catalyses S-sulfanyl-L-cysteinyl-[protein] + uridine(34) in tRNA + AH2 + ATP = 2-thiouridine(34) in tRNA + L-cysteinyl-[protein] + A + AMP + diphosphate + H(+). Its function is as follows. Catalyzes the 2-thiolation of uridine at the wobble position (U34) of tRNA, leading to the formation of s(2)U34. The protein is tRNA-specific 2-thiouridylase MnmA of Rickettsia peacockii (strain Rustic).